Here is a 75-residue protein sequence, read N- to C-terminus: Lipid-anchored plasma membrane protein CPP2 (75 aa).

The segment at 1–43 (MSQQQGYYQQGPPQQGYYQQGPPQQGYYQQGPPQQGYPQQQPV) is disordered. A run of 3 repeats spans residues 4–13 (QQGYYQQGPP), 14–23 (QQGYYQQGPP), and 24–33 (QQGYYQQGPP). The 3 X 10 AA tandem repeats of Q-Q-G-Y-Y-Q-Q-G-P-P stretch occupies residues 4–33 (QQGYYQQGPPQQGYYQQGPPQQGYYQQGPP).

The protein belongs to the CYSTM1 family. Palmitoylated near the C-terminus.

It is found in the cell membrane. The chain is Lipid-anchored plasma membrane protein CPP2 from Saccharomyces cerevisiae (strain ATCC 204508 / S288c) (Baker's yeast).